Here is a 293-residue protein sequence, read N- to C-terminus: Bifunctional protein FolD (293 aa).

NADP(+) is bound by residues 165–167 (GRS), Ser190, and Ile231.

Belongs to the tetrahydrofolate dehydrogenase/cyclohydrolase family. In terms of assembly, homodimer.

It carries out the reaction (6R)-5,10-methylene-5,6,7,8-tetrahydrofolate + NADP(+) = (6R)-5,10-methenyltetrahydrofolate + NADPH. It catalyses the reaction (6R)-5,10-methenyltetrahydrofolate + H2O = (6R)-10-formyltetrahydrofolate + H(+). It functions in the pathway one-carbon metabolism; tetrahydrofolate interconversion. Functionally, catalyzes the oxidation of 5,10-methylenetetrahydrofolate to 5,10-methenyltetrahydrofolate and then the hydrolysis of 5,10-methenyltetrahydrofolate to 10-formyltetrahydrofolate. In Parasynechococcus marenigrum (strain WH8102), this protein is Bifunctional protein FolD.